The sequence spans 101 residues: Large ribosomal subunit protein uL23 (101 aa).

The protein belongs to the universal ribosomal protein uL23 family. In terms of assembly, part of the 50S ribosomal subunit. Contacts protein L29, and trigger factor when it is bound to the ribosome.

Its function is as follows. One of the early assembly proteins it binds 23S rRNA. One of the proteins that surrounds the polypeptide exit tunnel on the outside of the ribosome. Forms the main docking site for trigger factor binding to the ribosome. The polypeptide is Large ribosomal subunit protein uL23 (Micrococcus luteus (strain ATCC 4698 / DSM 20030 / JCM 1464 / CCM 169 / CCUG 5858 / IAM 1056 / NBRC 3333 / NCIMB 9278 / NCTC 2665 / VKM Ac-2230) (Micrococcus lysodeikticus)).